Consider the following 1216-residue polypeptide: Apical endosomal glycoprotein (1216 aa).

Residues 1 to 21 (MCLPSCLLSIWVLFMAAQSLG) form the signal peptide. Residues 22–1155 (KTWVPDHCRS…SQGRVAAPVS (1134 aa)) are Extracellular-facing. The LDL-receptor class A 1; truncated domain occupies 27–54 (DHCRSPTEATCNFVCDCGDCSDEAQCGF). In terms of domain architecture, MAM 1 spans 62–224 (NTPFTCNFEQ…DDMEFWDCGL (163 aa)). N-linked (GlcNAc...) asparagine glycosylation is present at Asn-205. The 41-residue stretch at 229-269 (ARCPLGHHHCQNKACVEPHQLCDGEDNCGDSSDEDPLICSH) folds into the LDL-receptor class A 2 domain. Cystine bridges form between Cys-231/Cys-243, Cys-238/Cys-256, and Cys-250/Cys-267. The MAM 2 domain maps to 268–427 (SHHMATDFET…DLIMSNHCIL (160 aa)). Residues Asn-291, Asn-341, and Asn-368 are each glycosylated (N-linked (GlcNAc...) asparagine). The LDL-receptor class A 3 domain occupies 454 to 491 (RTCDAGHLSCDELCVPPEQLCDFQQHCAEGEDEEKCGT). 3 cysteine pairs are disulfide-bonded: Cys-456–Cys-467, Cys-463–Cys-480, and Cys-474–Cys-489. MAM domains follow at residues 492–647 (TDFE…DCNP), 654–813 (DQEV…PCWA), 812–973 (WAAK…PCAQ), and 972–1142 (AQPG…HCKQ). Asn-639 carries an N-linked (GlcNAc...) asparagine glycan. Asn-839 carries N-linked (GlcNAc...) asparagine glycosylation. Residues 1156–1176 (VPVAVGGALLLFLLLLGLGGW) traverse the membrane as a helical segment. The Cytoplasmic segment spans residues 1177-1216 (HWLQKQHLPCQSTDAAASGFDNILFNADQVTLPESITSNP).

As to expression, apical endosomal tubules of developing rat intestinal epithelial cells.

Its subcellular location is the membrane. Its function is as follows. Probably involved in the sorting and selective transport of receptors and ligands across polarized epithelia. This is Apical endosomal glycoprotein (Mamdc4) from Rattus norvegicus (Rat).